The chain runs to 599 residues: Elongation factor 4 (599 aa).

The region spanning 2-184 (KNIRNFSIIA…RLVRDIPPPQ (183 aa)) is the tr-type G domain. Residues 14–19 (DHGKST) and 131–134 (NKID) each bind GTP.

This sequence belongs to the TRAFAC class translation factor GTPase superfamily. Classic translation factor GTPase family. LepA subfamily.

It is found in the cell inner membrane. It carries out the reaction GTP + H2O = GDP + phosphate + H(+). Required for accurate and efficient protein synthesis under certain stress conditions. May act as a fidelity factor of the translation reaction, by catalyzing a one-codon backward translocation of tRNAs on improperly translocated ribosomes. Back-translocation proceeds from a post-translocation (POST) complex to a pre-translocation (PRE) complex, thus giving elongation factor G a second chance to translocate the tRNAs correctly. Binds to ribosomes in a GTP-dependent manner. This Salmonella agona (strain SL483) protein is Elongation factor 4.